Here is a 254-residue protein sequence, read N- to C-terminus: Glutathione S-transferase U12 (254 aa).

Positions 19-23 (KKRKK) match the Nuclear localization signal motif. The 82-residue stretch at 33–114 (TTVKLIGTWA…YVDESWPSDL (82 aa)) folds into the GST N-terminal domain. Glutathione-binding positions include 43–44 (SP), 71–72 (GK), 85–86 (KV), and 98–99 (ES). The region spanning 120-252 (LPSERAFARF…EFIEFAKKKF (133 aa)) is the GST C-terminal domain.

The protein belongs to the GST superfamily. Tau family.

The protein resides in the nucleus. It catalyses the reaction RX + glutathione = an S-substituted glutathione + a halide anion + H(+). Its function is as follows. May be involved in the conjugation of reduced glutathione to a wide number of exogenous and endogenous hydrophobic electrophiles and have a detoxification role against certain herbicides. The protein is Glutathione S-transferase U12 (GSTU12) of Arabidopsis thaliana (Mouse-ear cress).